The chain runs to 209 residues: Small ribosomal subunit protein uS4 (209 aa).

In terms of domain architecture, S4 RNA-binding spans 98 to 164 (RRLDNVVYRL…LPIKNAIELN (67 aa)).

This sequence belongs to the universal ribosomal protein uS4 family. In terms of assembly, part of the 30S ribosomal subunit. Contacts protein S5. The interaction surface between S4 and S5 is involved in control of translational fidelity.

Its function is as follows. One of the primary rRNA binding proteins, it binds directly to 16S rRNA where it nucleates assembly of the body of the 30S subunit. In terms of biological role, with S5 and S12 plays an important role in translational accuracy. The protein is Small ribosomal subunit protein uS4 of Thermosipho melanesiensis (strain DSM 12029 / CIP 104789 / BI429).